Reading from the N-terminus, the 153-residue chain is Transcriptional repressor NrdR (153 aa).

A zinc finger lies at Cys3–Cys34. The region spanning Leu49 to Val139 is the ATP-cone domain.

Belongs to the NrdR family. It depends on Zn(2+) as a cofactor.

Its function is as follows. Negatively regulates transcription of bacterial ribonucleotide reductase nrd genes and operons by binding to NrdR-boxes. This is Transcriptional repressor NrdR from Geobacillus sp. (strain WCH70).